We begin with the raw amino-acid sequence, 450 residues long: Bifunctional protein GlmU (450 aa).

Residues Met1–Arg228 form a pyrophosphorylase region. UDP-N-acetyl-alpha-D-glucosamine is bound by residues Leu8 to Gly11, Lys22, Gln75, Gly80 to Thr81, Tyr103 to Asp105, Gly140, Glu154, Asn169, and Asn226. Asp105 lines the Mg(2+) pocket. Asn226 contacts Mg(2+). The segment at Ala229–Leu249 is linker. The segment at Gly250–Thr450 is N-acetyltransferase. The UDP-N-acetyl-alpha-D-glucosamine site is built by Arg315 and Lys333. The active-site Proton acceptor is His345. 2 residues coordinate UDP-N-acetyl-alpha-D-glucosamine: Tyr348 and Asn359. Residues Ala362, Asn368–Tyr369, Ser387, Thr405, and Arg422 contribute to the acetyl-CoA site.

This sequence in the N-terminal section; belongs to the N-acetylglucosamine-1-phosphate uridyltransferase family. It in the C-terminal section; belongs to the transferase hexapeptide repeat family. In terms of assembly, homotrimer. Mg(2+) is required as a cofactor.

It is found in the cytoplasm. It carries out the reaction alpha-D-glucosamine 1-phosphate + acetyl-CoA = N-acetyl-alpha-D-glucosamine 1-phosphate + CoA + H(+). It catalyses the reaction N-acetyl-alpha-D-glucosamine 1-phosphate + UTP + H(+) = UDP-N-acetyl-alpha-D-glucosamine + diphosphate. Its pathway is nucleotide-sugar biosynthesis; UDP-N-acetyl-alpha-D-glucosamine biosynthesis; N-acetyl-alpha-D-glucosamine 1-phosphate from alpha-D-glucosamine 6-phosphate (route II): step 2/2. It functions in the pathway nucleotide-sugar biosynthesis; UDP-N-acetyl-alpha-D-glucosamine biosynthesis; UDP-N-acetyl-alpha-D-glucosamine from N-acetyl-alpha-D-glucosamine 1-phosphate: step 1/1. The protein operates within bacterial outer membrane biogenesis; LPS lipid A biosynthesis. Catalyzes the last two sequential reactions in the de novo biosynthetic pathway for UDP-N-acetylglucosamine (UDP-GlcNAc). The C-terminal domain catalyzes the transfer of acetyl group from acetyl coenzyme A to glucosamine-1-phosphate (GlcN-1-P) to produce N-acetylglucosamine-1-phosphate (GlcNAc-1-P), which is converted into UDP-GlcNAc by the transfer of uridine 5-monophosphate (from uridine 5-triphosphate), a reaction catalyzed by the N-terminal domain. This is Bifunctional protein GlmU from Ruegeria pomeroyi (strain ATCC 700808 / DSM 15171 / DSS-3) (Silicibacter pomeroyi).